Here is a 311-residue protein sequence, read N- to C-terminus: Mediator of RNA polymerase II transcription subunit 27-A (311 aa).

The protein belongs to the Mediator complex subunit 27 family. Component of the Mediator complex.

The protein resides in the nucleus. Its function is as follows. Component of the Mediator complex, a coactivator involved in the regulated transcription of nearly all RNA polymerase II-dependent genes. Mediator functions as a bridge to convey information from gene-specific regulatory proteins to the basal RNA polymerase II transcription machinery. Mediator is recruited to promoters by direct interactions with regulatory proteins and serves as a scaffold for the assembly of a functional preinitiation complex with RNA polymerase II and the general transcription factors. In Xenopus laevis (African clawed frog), this protein is Mediator of RNA polymerase II transcription subunit 27-A (med27-a).